We begin with the raw amino-acid sequence, 188 residues long: Guanylate kinase (188 aa).

Positions 2-183 constitute a Guanylate kinase-like domain; it reads TKLIIISAPS…CVEQIRKAIA (182 aa). Residue 9 to 16 participates in ATP binding; sequence APSGTGKS.

Belongs to the guanylate kinase family.

Its subcellular location is the cytoplasm. The enzyme catalyses GMP + ATP = GDP + ADP. In terms of biological role, essential for recycling GMP and indirectly, cGMP. This chain is Guanylate kinase, found in Porphyromonas gingivalis (strain ATCC BAA-308 / W83).